Reading from the N-terminus, the 461-residue chain is Early growth response factor homolog 1 (461 aa).

Disordered regions lie at residues 1 to 25 (MALHEPPSKLNRHSHSNLLKPPSLN), 96 to 152 (TLMP…ELTL), and 232 to 308 (DVLH…YSSL). 4 stretches are compositionally biased toward polar residues: residues 96–105 (TLMPAPSSSY), 129–144 (GSNSFGVPRMTNGNSK), 249–265 (LGSSLQNEHPQSNSRPS), and 272–291 (QRTNTSASLTRSMDHSSMSP). Residues 299–308 (YSNSASYSSL) are compositionally biased toward low complexity. 3 C2H2-type zinc fingers span residues 374–398 (YKCPRDGCDRRFSRSDELTRHIRIH), 404–426 (FQCRICMRAFSRSDHLTTHVRTH), and 432–454 (FSCDICGRKFARSDERKRHTKVH).

It belongs to the EGR C2H2-type zinc-finger protein family. As to expression, expressed in sheath cells and distal tip cells of the somatic gonad, as well as in the intestine and sperm (at protein level). Expression not observed in oocytes (at protein level).

It localises to the nucleus. The protein resides in the cytoplasm. The protein localises to the perinuclear region. Sequence-specific DNA-binding transcription factor. Plays a role in oocyte development, acting cell-autonomously in the somatic gonad. Involved in negative regulation of oocyte MAPK activation and inhibits oocyte maturation and ovulation. In Caenorhabditis elegans, this protein is Early growth response factor homolog 1.